The following is a 310-amino-acid chain: MASSNRGNARPLKSFLHELYLKHYPEVGDVVHLLNTIGVDCDLPPSHPLLTAQRGLFLARVLQAVQQHKLLEDTIVPKILKKLAYFLELLSYYSPKDEQRDIAEVLDHLKTNRDLGLDDRLWALIRKLRQDRHHASVNVLMPGSDYTAVSLQYYDGISIGMRKVIADVCRSGYASMPSMTATHNLSHQLLMASGPSEEPCAWRGFFNQVLLWTVALCKFRRCIYYNYIQGSIATISQLLHLEIKALCSWIISQDGMRLFQHSRPLLTLWESVAANQEVTDAITLPDCAEYIDLLKHTKHVLENCSAMQYK.

Belongs to the lymphocryptovirus BBRF1 family.

Enhances the ability of BRLF1 to induce lytic infection by cooperating with it to transcriptionally activate the BZLF1 promoter. The sequence is that of Transcriptional activator BRRF1 from Epstein-Barr virus (strain AG876) (HHV-4).